Here is an 84-residue protein sequence, read N- to C-terminus: Small ribosomal subunit protein eS27 (84 aa).

The C4-type zinc-finger motif lies at 38 to 60 (CPKCGATTTTFSHAHRQILCQKC).

Belongs to the eukaryotic ribosomal protein eS27 family. As to quaternary structure, component of the small ribosomal subunit. Requires Zn(2+) as cofactor.

The protein resides in the cytoplasm. Component of the small ribosomal subunit. The ribosome is a large ribonucleoprotein complex responsible for the synthesis of proteins in the cell. Required for proper rRNA processing and maturation of 18S rRNAs. This Entamoeba histolytica (strain ATCC 30459 / HM-1:IMSS / ABRM) protein is Small ribosomal subunit protein eS27 (RPS27).